The sequence spans 229 residues: 2-C-methyl-D-erythritol 4-phosphate cytidylyltransferase (229 aa).

The protein belongs to the IspD/TarI cytidylyltransferase family. IspD subfamily.

The catalysed reaction is 2-C-methyl-D-erythritol 4-phosphate + CTP + H(+) = 4-CDP-2-C-methyl-D-erythritol + diphosphate. It functions in the pathway isoprenoid biosynthesis; isopentenyl diphosphate biosynthesis via DXP pathway; isopentenyl diphosphate from 1-deoxy-D-xylulose 5-phosphate: step 2/6. Functionally, catalyzes the formation of 4-diphosphocytidyl-2-C-methyl-D-erythritol from CTP and 2-C-methyl-D-erythritol 4-phosphate (MEP). The polypeptide is 2-C-methyl-D-erythritol 4-phosphate cytidylyltransferase (Clostridium botulinum (strain ATCC 19397 / Type A)).